The chain runs to 276 residues: Pyrroline-5-carboxylate reductase (276 aa).

This sequence belongs to the pyrroline-5-carboxylate reductase family.

The protein localises to the cytoplasm. It catalyses the reaction L-proline + NADP(+) = (S)-1-pyrroline-5-carboxylate + NADPH + 2 H(+). The enzyme catalyses L-proline + NAD(+) = (S)-1-pyrroline-5-carboxylate + NADH + 2 H(+). The protein operates within amino-acid biosynthesis; L-proline biosynthesis; L-proline from L-glutamate 5-semialdehyde: step 1/1. The sequence is that of Pyrroline-5-carboxylate reductase (PROC1) from Arabidopsis thaliana (Mouse-ear cress).